Consider the following 31-residue polypeptide: Cytochrome b6-f complex subunit 6 (31 aa).

Residues 4–24 (LTSYFGFLLAALTITLALFIG) traverse the membrane as a helical segment.

This sequence belongs to the PetL family. The 4 large subunits of the cytochrome b6-f complex are cytochrome b6, subunit IV (17 kDa polypeptide, PetD), cytochrome f and the Rieske protein, while the 4 small subunits are PetG, PetL, PetM and PetN. The complex functions as a dimer.

The protein localises to the plastid. Its subcellular location is the chloroplast thylakoid membrane. Its function is as follows. Component of the cytochrome b6-f complex, which mediates electron transfer between photosystem II (PSII) and photosystem I (PSI), cyclic electron flow around PSI, and state transitions. PetL is important for photoautotrophic growth as well as for electron transfer efficiency and stability of the cytochrome b6-f complex. This Triticum aestivum (Wheat) protein is Cytochrome b6-f complex subunit 6.